A 311-amino-acid chain; its full sequence is DNA-directed RNA polymerase subunit alpha (311 aa).

Positions 1–227 are alpha N-terminal domain (alpha-NTD); sequence MAQFQIECVE…NLFCSLRNLD (227 aa). An alpha C-terminal domain (alpha-CTD) region spans residues 242 to 311; it reads ISQVLIEELQ…GISLPKEKTD (70 aa).

It belongs to the RNA polymerase alpha chain family. In terms of assembly, in plastids the minimal PEP RNA polymerase catalytic core is composed of four subunits: alpha, beta, beta', and beta''. When a (nuclear-encoded) sigma factor is associated with the core the holoenzyme is formed, which can initiate transcription.

It is found in the plastid. The protein localises to the chloroplast. The enzyme catalyses RNA(n) + a ribonucleoside 5'-triphosphate = RNA(n+1) + diphosphate. Functionally, DNA-dependent RNA polymerase catalyzes the transcription of DNA into RNA using the four ribonucleoside triphosphates as substrates. The polypeptide is DNA-directed RNA polymerase subunit alpha (Porphyra purpurea (Red seaweed)).